Reading from the N-terminus, the 920-residue chain is MTDLAELARFTAELPFSLDDFQQRACAALERGHGVLVCAPTGAGKTVVGEFAVHLALAAGGKCFYTTPLKALSNQKYTDLTARYGRNRIGLLTGDQSVNGDSPVVVMTTEVLRNMLYADSFALQGLSHVVMDEVHFIADRMRGPVWEEVILHLPDDVRMVSLSATVSNAEEFGGWVQTVRGDTTVVVDEHRPVPLWQHVLVGKRLFDLFDYDSNVDQSPVNPNLLRHIAHCREADRMSDWRNPRRRAGRGSGVRPRFYRSLARPEVIAILDAEGLLPAITFVFSRFGCDAAVQQCLRSPLRLTSEEERAQIAEVIDHRCGDLADADLAVLGYYEWREGLLRGLAAHHAGMLPAFRHAVEELFTAGLVKAVFATETLALGINMPARTVVLERLVKFNGKQHVPLTPGEYTQLTGRAGRRGIDVEGHAVVIWHPSEDTSGPSAVAGLASARTFPLRSSFVPSYNMTINLVHWMSPERAHALLEQSFAQYQADRSVVGLVRGIERCTQVLGDISSELGGPDAPILEYARLRARIAEMERAQSFVFRLQRKQAANDVLAALRRGDIITITHGRHGGLAVVLESARDSSNPRPLVLTEHRWAGRISSADYMGAAAPVGSMTLPKRVEHRQQRVRRDLASALRSAATRLSVPDIGDGVDGDKIGFNDGVLHDPELASLRAQLRRHRSNNAPGLDTQLQQAERYLRIERYNAQLQRKVAAATNSLARTFDRIVGLLIERDFIRGPADDPQVTDDGRLLARIYSESDLLVAECLRTGAWAGLRPAELAAVVSAVLYETRGDDGPGGPVDAEAPTPRLRQALQHTSRLSATLRADEQRHRIALSREPDDGFVGVIYCWARTGDLAAVLAAADASGNGAPLSAGDFVRWCRQVLDLLDQLRNAAPEPDLRATAKRAINDVRRGVVAVDAG.

Residues 26 to 184 form the Helicase ATP-binding domain; sequence CAALERGHGV…WVQTVRGDTT (159 aa). 39–46 lines the ATP pocket; the sequence is APTGAGKT. A DEVH box motif is present at residues 132–135; sequence DEVH. In terms of domain architecture, Helicase C-terminal spans 265–469; it reads EVIAILDAEG…SYNMTINLVH (205 aa).

This sequence belongs to the helicase family. SKI2 subfamily.

This is Probable helicase HelY (helY) from Mycobacterium leprae (strain TN).